The following is a 2293-amino-acid chain: Protein Ycf2 B (2293 aa).

ATP is bound at residue 1647–1654 (GSIGTGRS).

Belongs to the Ycf2 family.

The protein resides in the plastid. It is found in the chloroplast stroma. Its function is as follows. Probable ATPase of unknown function. Its presence in a non-photosynthetic plant (Epifagus virginiana) and experiments in tobacco indicate that it has an essential function which is probably not related to photosynthesis. In Crucihimalaya wallichii (Rock-cress), this protein is Protein Ycf2 B.